A 147-amino-acid polypeptide reads, in one-letter code: Large ribosomal subunit protein uL15 (147 aa).

Over residues 1 to 14 (MKLHELRPAEGAVR) the composition is skewed to basic and acidic residues. The tract at residues 1–54 (MKLHELRPAEGAVRDRKRKGRGTASGLGKTAGRGSNGQKARSGGGVRPGFEGGQ) is disordered. 2 stretches are compositionally biased toward gly residues: residues 23–35 (TASG…GRGS) and 42–52 (SGGGVRPGFEG).

This sequence belongs to the universal ribosomal protein uL15 family. Part of the 50S ribosomal subunit.

Functionally, binds to the 23S rRNA. This chain is Large ribosomal subunit protein uL15, found in Alkaliphilus oremlandii (strain OhILAs) (Clostridium oremlandii (strain OhILAs)).